The following is a 93-amino-acid chain: Acylphosphatase (93 aa).

In terms of domain architecture, Acylphosphatase-like spans 7–93 (RLTAWVHGRV…ADAIAGFTER (87 aa)). Residues Arg22 and Asn40 contribute to the active site.

It belongs to the acylphosphatase family.

The enzyme catalyses an acyl phosphate + H2O = a carboxylate + phosphate + H(+). The chain is Acylphosphatase (acyP) from Mycolicibacterium vanbaalenii (strain DSM 7251 / JCM 13017 / BCRC 16820 / KCTC 9966 / NRRL B-24157 / PYR-1) (Mycobacterium vanbaalenii).